The sequence spans 149 residues: UPF0178 protein SE_0451 (149 aa).

It belongs to the UPF0178 family.

This Staphylococcus epidermidis (strain ATCC 12228 / FDA PCI 1200) protein is UPF0178 protein SE_0451.